The primary structure comprises 393 residues: Putative B3 domain-containing protein Os06g0632500 (393 aa).

3 DNA-binding regions (TF-B3) span residues 27–123 (LSVP…FDPG), 141–238 (RPRF…FLQN), and 316–393 (NSFT…VQRR).

It is found in the nucleus. In Oryza sativa subsp. japonica (Rice), this protein is Putative B3 domain-containing protein Os06g0632500.